Consider the following 202-residue polypeptide: MYIGRFLVVGKTKEGKPFAAYRVSSRSFPNREAKKMDDNTVAIIPKDLNEMFKNPYITYNCIKVIDKTIVVSNGTHTDFIAEKLHFGKRDALAYVLAVMDYEKDDYKTPRIAAILDENECYMGYVAHDDIRVKKVELKDGKGYYLGVYNACKIDENQIIDIKGETAEEIADYILNYEEFEHPVACAVAVIDKDGIKIATKGK.

This sequence belongs to the archaeal IMP cyclohydrolase family.

It catalyses the reaction IMP + H2O = 5-formamido-1-(5-phospho-D-ribosyl)imidazole-4-carboxamide. The protein operates within purine metabolism; IMP biosynthesis via de novo pathway; IMP from 5-formamido-1-(5-phospho-D-ribosyl)imidazole-4-carboxamide: step 1/1. Catalyzes the cyclization of 5-formylamidoimidazole-4-carboxamide ribonucleotide to IMP. The polypeptide is IMP cyclohydrolase (purO) (Methanocaldococcus jannaschii (strain ATCC 43067 / DSM 2661 / JAL-1 / JCM 10045 / NBRC 100440) (Methanococcus jannaschii)).